The following is a 640-amino-acid chain: MPIITLPDGSQRSFDHPVSVAEVAQSIGAGLAKATLAGKVDGRLVDACDTIDRDATLQIITPKDEEGLEIIRHSCAHLVGHAVKQLYPTAKMVIGPVIEEGFYYDIFFERPFTPEDMAAIQQRMRELIDKDYDVIKKMTPRAEVIELFKSRGEDYKLRLIDDMPDEKAMGLYFHEEYVDMCRGPHVPNTRFLKAFQLTKISGAYWRGDSKNEQLQRIYGTAWADKKQLAAYIQRIEEAEKRDHRRIGKQLDLFHLQEEAPGMVFWHPNGWSVYQVLEQYMRKVQRDHGYVEVRTPQVVDRILWERSGHWSNYAENMFTTSSESRDYAVKPMNCPCHVQIFNQGLKSYRDLPLRLAEFGACHRNEPSGALHGIMRVRGFTQDDAHIFCTEEQVKKEAADFIKLTLQVYRDFGFTDIAMKLSTRPAKRVGSDELWDRAEGALADALNESGLAWEYQPGEGAFYGPKIEFTLKDCLGRNWQCGTLQYDPNLPERLDASYIAEDNNRKRPVMLHRAILGSFERFIGMLIEHYAGAFPAWLAPTQAVVMNITDKQADFAAEVVRILGESGFRAKSDLRNEKIGFKIREHTLLKVPYLLVIGDREVESKAVAVRTREGEDLGSMPVTQFAELLAQAVSRRGRQDSE.

Positions methionine 1–threonine 61 constitute a TGS domain. The interval aspartate 242–proline 533 is catalytic. Positions 333, 384, and 510 each coordinate Zn(2+).

Belongs to the class-II aminoacyl-tRNA synthetase family. As to quaternary structure, homodimer. Zn(2+) is required as a cofactor.

It localises to the cytoplasm. The enzyme catalyses tRNA(Thr) + L-threonine + ATP = L-threonyl-tRNA(Thr) + AMP + diphosphate + H(+). Functionally, catalyzes the attachment of threonine to tRNA(Thr) in a two-step reaction: L-threonine is first activated by ATP to form Thr-AMP and then transferred to the acceptor end of tRNA(Thr). Also edits incorrectly charged L-seryl-tRNA(Thr). This is Threonine--tRNA ligase from Pseudomonas aeruginosa (strain LESB58).